Consider the following 459-residue polypeptide: Ribulose bisphosphate carboxylase large chain (459 aa).

The residue at position 4 (lysine 4) is an N6,N6,N6-trimethyllysine. Substrate contacts are provided by asparagine 113 and threonine 163. The active-site Proton acceptor is lysine 165. Position 167 (lysine 167) interacts with substrate. The Mg(2+) site is built by lysine 191, aspartate 193, and glutamate 194. At lysine 191 the chain carries N6-carboxylysine. Histidine 284 functions as the Proton acceptor in the catalytic mechanism. 3 residues coordinate substrate: arginine 285, histidine 317, and serine 369.

This sequence belongs to the RuBisCO large chain family. Type I subfamily. In terms of assembly, heterohexadecamer of 8 large chains and 8 small chains; disulfide-linked. The disulfide link is formed within the large subunit homodimers. Mg(2+) serves as cofactor. In terms of processing, the disulfide bond which can form in the large chain dimeric partners within the hexadecamer appears to be associated with oxidative stress and protein turnover.

It is found in the plastid. Its subcellular location is the chloroplast. The catalysed reaction is 2 (2R)-3-phosphoglycerate + 2 H(+) = D-ribulose 1,5-bisphosphate + CO2 + H2O. The enzyme catalyses D-ribulose 1,5-bisphosphate + O2 = 2-phosphoglycolate + (2R)-3-phosphoglycerate + 2 H(+). Functionally, ruBisCO catalyzes two reactions: the carboxylation of D-ribulose 1,5-bisphosphate, the primary event in carbon dioxide fixation, as well as the oxidative fragmentation of the pentose substrate in the photorespiration process. Both reactions occur simultaneously and in competition at the same active site. The chain is Ribulose bisphosphate carboxylase large chain from Geum quellyon (Chilean avens).